A 282-amino-acid polypeptide reads, in one-letter code: Pantothenate synthetase (282 aa).

Residue 30-37 coordinates ATP; it reads MGYYHAGH. The active-site Proton donor is the histidine 37. A (R)-pantoate-binding site is contributed by glutamine 61. Residue glutamine 61 participates in beta-alanine binding. 147-150 serves as a coordination point for ATP; that stretch reads GQKD. Glutamine 153 contacts (R)-pantoate. Residues valine 176 and 184-187 each bind ATP; that span reads LSSR.

This sequence belongs to the pantothenate synthetase family. Homodimer.

It localises to the cytoplasm. The catalysed reaction is (R)-pantoate + beta-alanine + ATP = (R)-pantothenate + AMP + diphosphate + H(+). It participates in cofactor biosynthesis; (R)-pantothenate biosynthesis; (R)-pantothenate from (R)-pantoate and beta-alanine: step 1/1. Its function is as follows. Catalyzes the condensation of pantoate with beta-alanine in an ATP-dependent reaction via a pantoyl-adenylate intermediate. The sequence is that of Pantothenate synthetase from Desulfovibrio desulfuricans (strain ATCC 27774 / DSM 6949 / MB).